The sequence spans 466 residues: SVGFKAGVKDYKLTYYTPDYVTKDTDILAAFRVTPQPGVPPEEAGAAVAAESSTGTWTTVWTDGLTSLDRYKGRCYNIEPVAGEENQYICYVAYPLDLFEEGSVTNMFTSIVGNAFGFKALRALRLEDLRIPSAYVKTFQGPPHGIQVERDKLNKYGRPLLGCTIKPKLGLSAKNYGRAVYECLRGGLDFTKDDENVNSQPFMRWRDRFLFCAEAIFKSQAETGEIKGHYLNATAGTCEEMIKRAVFARELGVPIVMHDYLTGGFTANTSLAHYCRDNGLLLHIHRAMHAVIDRQKNHGMHFRVLAKALRMSGGDHIHAGTVVGKLEGERDITLGFVDLLRDDFIEKDRSRGIYFTQDWVSLPGVLPVASGGIHVWHMPALTEIFGDDSVLQFGGGTLGHPWGNAPGAVANRVALEACVQARNEGRDLAREGNEIIREASKWSPELAAACEVWKEIKFQFEAMDTL.

Lys5 bears the N6,N6,N6-trimethyllysine mark. 2 residues coordinate substrate: Asn114 and Thr164. Lys166 acts as the Proton acceptor in catalysis. Lys168 is a substrate binding site. Mg(2+) contacts are provided by Lys192, Asp194, and Glu195. Lys192 is subject to N6-carboxylysine. The Proton acceptor role is filled by His285. Positions 286, 318, and 370 each coordinate substrate.

This sequence belongs to the RuBisCO large chain family. Type I subfamily. Heterohexadecamer of 8 large chains and 8 small chains; disulfide-linked. The disulfide link is formed within the large subunit homodimers. Mg(2+) is required as a cofactor. The disulfide bond which can form in the large chain dimeric partners within the hexadecamer appears to be associated with oxidative stress and protein turnover.

It is found in the plastid. The protein localises to the chloroplast. The catalysed reaction is 2 (2R)-3-phosphoglycerate + 2 H(+) = D-ribulose 1,5-bisphosphate + CO2 + H2O. The enzyme catalyses D-ribulose 1,5-bisphosphate + O2 = 2-phosphoglycolate + (2R)-3-phosphoglycerate + 2 H(+). In terms of biological role, ruBisCO catalyzes two reactions: the carboxylation of D-ribulose 1,5-bisphosphate, the primary event in carbon dioxide fixation, as well as the oxidative fragmentation of the pentose substrate in the photorespiration process. Both reactions occur simultaneously and in competition at the same active site. This is Ribulose bisphosphate carboxylase large chain from Aesculus pavia (Red buckeye).